We begin with the raw amino-acid sequence, 652 residues long: MLAHGSNDYGVSLKGNKTGSSPSKASSLNWNEPHTLNEQNTYCYCGKDRNLRFPDLQCSVCLNMFHLSCLSPPCTSMMGFSTNYQFVCKHCTEDGFERFERGVSAWKAITATAMANLVVKRYVETNPDVPVDSFNAEKMRNFQANTYFFKKKEDLIPFIEEHWQLLCPDREKVQTWQATLGSCLVANRDTYRAKDETMRNQNSEYALNNPNLFDFRSGYIFPFQRVGATVPKKRLVETETPPPSSSKLKEDYKDSKREMKRSNTPWSNASIKKNEVPTVPIRYKPPPWRDSDFETVPKLPIFYPNSSSPNFFSLSEIPFNRRGFRYSPCEAAKDLPNVMYREIELPPFTSRINWHDISTPVFIDHSALCATVEKGFRMARSNVFMTSGEWYFEIKIEKGGGDDGAHVRIGVSRREAPLDAPVGYDAYSYGLRDLGGQKVHMSRPRNFMDSFGTGDIIGLHISLPKPSFAQHTTLPSCHDRIPIRYKGQLYFEQPDYVPSKMMDELMIPSKHNRYIDLPYIPGSFIKVYKNGSYMGTAFENLLDFNPPNSINSNHYSFDDGSLGYYPSISMYGGGIARFQFGPQFSHRPLVLGSNVRPVSERYNEQIAEDVLCDILDEIDYAEDPNTSSVTIDVPQEPNAGITIIPEIKDITE.

The segment at 1 to 32 is disordered; that stretch reads MLAHGSNDYGVSLKGNKTGSSPSKASSLNWNE. Over residues 15–32 the composition is skewed to polar residues; the sequence is GNKTGSSPSKASSLNWNE. A PHD-type zinc finger spans residues 40 to 94; sequence NTYCYCGKDRNLRFPDLQCSVCLNMFHLSCLSPPCTSMMGFSTNYQFVCKHCTED. Positions 43, 45, 58, 61, 66, 69, 88, and 91 each coordinate Zn(2+). Residues 234–270 are disordered; it reads RLVETETPPPSSSKLKEDYKDSKREMKRSNTPWSNAS. The segment covering 247 to 261 has biased composition (basic and acidic residues); it reads KLKEDYKDSKREMKR. The region spanning 330 to 519 is the B30.2/SPRY domain; that stretch reads EAAKDLPNVM…KHNRYIDLPY (190 aa).

The protein belongs to the cclA family. As to quaternary structure, component of the Set1 complex composed of ash2, sdc1, set1, shg1, spp1, swd1, swd2 and swd3. Component of the Lid2 complex composed of ash2, jmj3, lid2, sdc1 and snt2.

The protein resides in the nucleus. Component of the COMPASS (Set1C) complex that specifically mono-, di- and trimethylates histone H3 to form H3K4me1/2/3, which subsequently plays a role in telomere length maintenance and transcription elongation regulation. Regulates MAPK pathway and sporulation through H3K4 methylation. This is Set1 complex component ash2 from Schizosaccharomyces pombe (strain 972 / ATCC 24843) (Fission yeast).